Reading from the N-terminus, the 159-residue chain is Nucleoside diphosphate kinase (159 aa).

ATP is bound by residues Lys-13, Phe-61, Arg-89, Thr-95, Arg-106, and Asn-116. The active-site Pros-phosphohistidine intermediate is His-119.

It belongs to the NDK family. Mg(2+) serves as cofactor.

It is found in the cytoplasm. The catalysed reaction is a 2'-deoxyribonucleoside 5'-diphosphate + ATP = a 2'-deoxyribonucleoside 5'-triphosphate + ADP. The enzyme catalyses a ribonucleoside 5'-diphosphate + ATP = a ribonucleoside 5'-triphosphate + ADP. Major role in the synthesis of nucleoside triphosphates other than ATP. The ATP gamma phosphate is transferred to the NDP beta phosphate via a ping-pong mechanism, using a phosphorylated active-site intermediate. In Halorubrum lacusprofundi (strain ATCC 49239 / DSM 5036 / JCM 8891 / ACAM 34), this protein is Nucleoside diphosphate kinase.